A 471-amino-acid chain; its full sequence is Meiosis-specific with OB domain-containing protein (471 aa).

The OB DNA-binding region spans 167–272; the sequence is IINVLAAVKS…EANILLNFIR (106 aa).

The protein belongs to the MEIOB family. Component of a multiprotein complex with RPA2 and SPATA22. Interacts with SPATA22. Interacts with the complex BRME1:HSF2BP:BRCA2.

It localises to the cytoplasm. The protein localises to the nucleus. It is found in the chromosome. Single-stranded DNA-binding protein required for homologous recombination in meiosis I. Required for double strand breaks (DSBs) repair and crossover formation and promotion of faithful and complete synapsis. Not required for the initial loading of recombinases but required to maintain a proper number of RAD51 and DMC1 foci after the zygotene stage. May act by ensuring the stabilization of recombinases, which is required for successful homology search and meiotic recombination. Displays Single-stranded DNA 3'-5' exonuclease activity in vitro. In Macaca fascicularis (Crab-eating macaque), this protein is Meiosis-specific with OB domain-containing protein (MEIOB).